The following is a 620-amino-acid chain: Protein AFR1 (620 aa).

The span at 1 to 12 (MEGSYLSAQENQ) shows a compositional bias: polar residues. Positions 1–20 (MEGSYLSAQENQPIPERLIP) are disordered. A phosphoserine mark is found at S472 and S526.

This sequence to yeast YER158C.

Its function is as follows. Acts in conjunction with the alpha-factor receptor to promote morphogenesis and adaptation. The polypeptide is Protein AFR1 (AFR1) (Saccharomyces cerevisiae (strain ATCC 204508 / S288c) (Baker's yeast)).